The primary structure comprises 260 residues: Sperm microtubule inner protein 6 (260 aa).

The protein belongs to the SPMIP6 family. Microtubule inner protein component of sperm flagellar doublet microtubules. Interacts with alpha-tubulin. Testis-specific, expressed exclusively in germ cells (at protein level). In terms of tissue distribution, testis-specific. As to expression, expressed in both lung and testis.

The protein localises to the cytoplasm. Its subcellular location is the cytoskeleton. It is found in the nucleus. The protein resides in the mitochondrion. It localises to the flagellum axoneme. May participate in intramanchette transport and midpiece formation of the sperm tail. May play a potential role in somatic cell proliferation. The protein is Sperm microtubule inner protein 6 (SPMIP6) of Mus musculus (Mouse).